Reading from the N-terminus, the 266-residue chain is Thymidylate synthase (266 aa).

Position 24 (Arg24) interacts with dUMP. Residue His54 participates in (6R)-5,10-methylene-5,6,7,8-tetrahydrofolate binding. 129-130 (RR) contacts dUMP. Residue Cys149 is the Nucleophile of the active site. Residues 169-172 (RSAD), Asn180, and 210-212 (HIY) contribute to the dUMP site. Position 172 (Asp172) interacts with (6R)-5,10-methylene-5,6,7,8-tetrahydrofolate. Residue Ala265 participates in (6R)-5,10-methylene-5,6,7,8-tetrahydrofolate binding.

Belongs to the thymidylate synthase family. Bacterial-type ThyA subfamily. As to quaternary structure, homodimer.

The protein localises to the cytoplasm. It carries out the reaction dUMP + (6R)-5,10-methylene-5,6,7,8-tetrahydrofolate = 7,8-dihydrofolate + dTMP. It functions in the pathway pyrimidine metabolism; dTTP biosynthesis. Catalyzes the reductive methylation of 2'-deoxyuridine-5'-monophosphate (dUMP) to 2'-deoxythymidine-5'-monophosphate (dTMP) while utilizing 5,10-methylenetetrahydrofolate (mTHF) as the methyl donor and reductant in the reaction, yielding dihydrofolate (DHF) as a by-product. This enzymatic reaction provides an intracellular de novo source of dTMP, an essential precursor for DNA biosynthesis. The protein is Thymidylate synthase of Mycobacterium avium (strain 104).